The chain runs to 306 residues: Acetyl-coenzyme A carboxylase carboxyl transferase subunit beta (306 aa).

One can recognise a CoA carboxyltransferase N-terminal domain in the interval 27–296 (LWHKCPSCEA…PKFVAAPIEP (270 aa)). Zn(2+) is bound by residues cysteine 31, cysteine 34, cysteine 50, and cysteine 53. The segment at 31 to 53 (CPSCEAVLYRPELEKTLDVCPKC) adopts a C4-type zinc-finger fold.

Belongs to the AccD/PCCB family. As to quaternary structure, acetyl-CoA carboxylase is a heterohexamer composed of biotin carboxyl carrier protein (AccB), biotin carboxylase (AccC) and two subunits each of ACCase subunit alpha (AccA) and ACCase subunit beta (AccD). Requires Zn(2+) as cofactor.

The protein resides in the cytoplasm. The enzyme catalyses N(6)-carboxybiotinyl-L-lysyl-[protein] + acetyl-CoA = N(6)-biotinyl-L-lysyl-[protein] + malonyl-CoA. It participates in lipid metabolism; malonyl-CoA biosynthesis; malonyl-CoA from acetyl-CoA: step 1/1. Its function is as follows. Component of the acetyl coenzyme A carboxylase (ACC) complex. Biotin carboxylase (BC) catalyzes the carboxylation of biotin on its carrier protein (BCCP) and then the CO(2) group is transferred by the transcarboxylase to acetyl-CoA to form malonyl-CoA. In Pseudomonas fluorescens (strain Pf0-1), this protein is Acetyl-coenzyme A carboxylase carboxyl transferase subunit beta.